The following is a 153-amino-acid chain: Superoxide dismutase [Cu-Zn] (153 aa).

Cu cation is bound by residues H45, H47, and H62. C56 and C145 are disulfide-bonded. Residues H62, H70, H79, and D82 each coordinate Zn(2+). H119 contacts Cu cation.

Belongs to the Cu-Zn superoxide dismutase family. As to quaternary structure, homodimer. It depends on Cu cation as a cofactor. Zn(2+) serves as cofactor.

It is found in the cytoplasm. The enzyme catalyses 2 superoxide + 2 H(+) = H2O2 + O2. Destroys radicals which are normally produced within the cells and which are toxic to biological systems. The protein is Superoxide dismutase [Cu-Zn] (SOD) of Schistosoma mansoni (Blood fluke).